Here is a 553-residue protein sequence, read N- to C-terminus: Methyl-coenzyme M reductase I subunit alpha (553 aa).

Gln150 serves as a coordination point for coenzyme F430. Residues Arg228, 259–260, and Arg273 contribute to the coenzyme B site; that span reads KH. Residue Arg274 is modified to 5-methylarginine. 2 residues coordinate coenzyme M: Tyr335 and Tyr447.

Belongs to the methyl-coenzyme M reductase alpha subunit family. As to quaternary structure, MCR is a hexamer of two alpha, two beta, and two gamma chains, forming a dimer of heterotrimers. Coenzyme F430 serves as cofactor. In terms of processing, is methylated on C5 of Arg-274 by the methyltransferase MJ0841. This post-translational methylation, despite being not essential in vivo, plays a role for the stability and structural integrity of MCR.

It localises to the cytoplasm. It catalyses the reaction coenzyme B + methyl-coenzyme M = methane + coenzyme M-coenzyme B heterodisulfide. It functions in the pathway one-carbon metabolism; methyl-coenzyme M reduction; methane from methyl-coenzyme M: step 1/1. In terms of biological role, component of the methyl-coenzyme M reductase (MCR) I that catalyzes the reductive cleavage of methyl-coenzyme M (CoM-S-CH3 or 2-(methylthio)ethanesulfonate) using coenzyme B (CoB or 7-mercaptoheptanoylthreonine phosphate) as reductant which results in the production of methane and the mixed heterodisulfide of CoB and CoM (CoM-S-S-CoB). This is the final step in methanogenesis. The sequence is that of Methyl-coenzyme M reductase I subunit alpha (mcrA) from Methanocaldococcus jannaschii (strain ATCC 43067 / DSM 2661 / JAL-1 / JCM 10045 / NBRC 100440) (Methanococcus jannaschii).